We begin with the raw amino-acid sequence, 192 residues long: Erythropoietin (192 aa).

A signal peptide spans 1–27 (MGVHECPAWLWLLLSLVSLPLGLPVPG). 2 cysteine pairs are disulfide-bonded: Cys34–Cys187 and Cys56–Cys60. Asn51 carries an N-linked (GlcNAc...) asparagine glycan. 2 N-linked (GlcNAc...) asparagine glycosylation sites follow: Asn65 and Asn110. O-linked (GalNAc...) serine glycosylation is present at Ser152.

It belongs to the EPO/TPO family. Produced by kidney or liver of adult mammals and by liver of fetal or neonatal mammals.

It is found in the secreted. Its function is as follows. Hormone involved in the regulation of erythrocyte proliferation and differentiation and the maintenance of a physiological level of circulating erythrocyte mass. Binds to EPOR leading to EPOR dimerization and JAK2 activation thereby activating specific downstream effectors, including STAT1 and STAT3. The polypeptide is Erythropoietin (EPO) (Macaca fascicularis (Crab-eating macaque)).